We begin with the raw amino-acid sequence, 157 residues long: Ribosome-binding factor A (157 aa).

Residues R126 to E157 are disordered. A compositionally biased stretch (acidic residues) spans E145–E157.

This sequence belongs to the RbfA family. Monomer. Binds 30S ribosomal subunits, but not 50S ribosomal subunits or 70S ribosomes.

The protein resides in the cytoplasm. One of several proteins that assist in the late maturation steps of the functional core of the 30S ribosomal subunit. Associates with free 30S ribosomal subunits (but not with 30S subunits that are part of 70S ribosomes or polysomes). Required for efficient processing of 16S rRNA. May interact with the 5'-terminal helix region of 16S rRNA. In Bifidobacterium longum (strain DJO10A), this protein is Ribosome-binding factor A.